Here is a 490-residue protein sequence, read N- to C-terminus: GTPase Der (490 aa).

The region spanning methionine 1 to leucine 165 is the EngA-type G 1 domain. Residues glycine 7–serine 14, aspartate 54–valine 58, and asparagine 117–aspartate 120 each bind GTP. The tract at residues leucine 165–serine 184 is disordered. Over residues glutamate 169–glutamate 178 the composition is skewed to acidic residues. Residues leucine 227–threonine 400 enclose the EngA-type G 2 domain. GTP is bound by residues glycine 233–serine 240, aspartate 280–leucine 284, and asparagine 345–aspartate 348. The region spanning threonine 401–proline 485 is the KH-like domain.

This sequence belongs to the TRAFAC class TrmE-Era-EngA-EngB-Septin-like GTPase superfamily. EngA (Der) GTPase family. In terms of assembly, associates with the 50S ribosomal subunit.

Functionally, GTPase that plays an essential role in the late steps of ribosome biogenesis. The polypeptide is GTPase Der (Chlamydia muridarum (strain MoPn / Nigg)).